The sequence spans 382 residues: Putative oxidoreductase C1F5.03c (382 aa).

A helical membrane pass occupies residues 7 to 27 (IVIVGGGITGVSCLYFLAHHP).

It belongs to the TDA3 family.

The protein localises to the cytoplasm. It is found in the membrane. Its function is as follows. Putative oxidoreductase that negatively regulates the retrieval of cargo from late endosomes to the Golgi. The polypeptide is Putative oxidoreductase C1F5.03c (Schizosaccharomyces pombe (strain 972 / ATCC 24843) (Fission yeast)).